The following is a 456-amino-acid chain: uncharacterized protein (456 aa).

The region spanning 277–440 is the YrdC-like domain; the sequence is IKNTKTIKQL…TKQLVRTTAK (164 aa).

This is an uncharacterized protein from Mycoplasma genitalium (strain ATCC 33530 / DSM 19775 / NCTC 10195 / G37) (Mycoplasmoides genitalium).